The sequence spans 466 residues: 3-isopropylmalate dehydratase large subunit (466 aa).

3 residues coordinate [4Fe-4S] cluster: Cys347, Cys407, and Cys410.

Belongs to the aconitase/IPM isomerase family. LeuC type 1 subfamily. As to quaternary structure, heterodimer of LeuC and LeuD. The cofactor is [4Fe-4S] cluster.

The enzyme catalyses (2R,3S)-3-isopropylmalate = (2S)-2-isopropylmalate. It participates in amino-acid biosynthesis; L-leucine biosynthesis; L-leucine from 3-methyl-2-oxobutanoate: step 2/4. Catalyzes the isomerization between 2-isopropylmalate and 3-isopropylmalate, via the formation of 2-isopropylmaleate. This chain is 3-isopropylmalate dehydratase large subunit, found in Buchnera aphidicola subsp. Thelaxes suberi.